A 515-amino-acid chain; its full sequence is Organic cation/carnitine transporter 5 (515 aa).

Residues 1-43 are Cytoplasmic-facing; the sequence is MADSLAPLLPTHIEEDEDTSSPLTFDKILEKSLSDFGFSQFLQ. The helical transmembrane segment at 44–64 threads the bilayer; that stretch reads IVLVGLALTFDSQQIFITVFT. Topologically, residues 65-124 are extracellular; sequence DAYPTWHCLDHTICNPATTDICKIPRSAWDWDGGFKGKSVISEFDLECSSSFLRSLPSST. Residues 125 to 145 traverse the membrane as a helical segment; that stretch reads FYVGSIVGGVVLAMIPDGSLG. Residues 146-149 are Cytoplasmic-facing; it reads RKQL. Residues 150–172 form a helical membrane-spanning segment; sequence LFFSSFAMSLTGISIFLSSNIWI. At 173–177 the chain is on the extracellular side; it reads YSFLK. The chain crosses the membrane as a helical span at residues 178–195; sequence FVIGFARSQTGTYALVLI. Position 195-202 (195-202) interacts with ATP; sequence ISERISTK. Residues 196–208 are Cytoplasmic-facing; sequence SERISTKWRPRAT. The chain crosses the membrane as a helical span at residues 209-229; sequence MVPFTLFVLGFMSLSGIAYLV. The Extracellular portion of the chain corresponds to 230 to 235; it reads RHASWK. Residues 236–256 form a helical membrane-spanning segment; it reads VLYLCTSIPAGIHSIFIYFFA. Over 257-320 the chain is Cytoplasmic; that stretch reads LESPRWLHLE…LFIIKWAFRR (64 aa). A helical transmembrane segment spans residues 321–341; that stretch reads VTLVMIIMFGLGMSYYGVPLA. Residues 342-350 are Extracellular-facing; the sequence is VRDIKVNIY. The helical transmembrane segment at 351–371 threads the bilayer; it reads MSEALNAMVELPTFVVTPILL. Over 372–379 the chain is Cytoplasmic; sequence EQFSRRSS. A helical transmembrane segment spans residues 380–400; that stretch reads VLVNCLIGGASGVLCFVMSLY. Topologically, residues 401-411 are extracellular; the sequence is GRTKIAFALEL. The chain crosses the membrane as a helical span at residues 412-432; that stretch reads GSFFCARIGFNLMAIYLVELF. The Cytoplasmic segment spans residues 433–441; it reads PTCVRNSAT. The chain crosses the membrane as a helical span at residues 442 to 462; that stretch reads MMLRQALVVGGACCPLIASLG. Residues 463–467 lie on the Extracellular side of the membrane; the sequence is RNVPS. A helical membrane pass occupies residues 468–488; the sequence is LSFAVFGFAMSGLGLFALLLP. At 489 to 515 the chain is on the cytoplasmic side; the sequence is ETKGLSLCDTMEEQEQRDQALKTSHSC.

Belongs to the major facilitator (TC 2.A.1) superfamily. Organic cation transporter (TC 2.A.1.19) family. In terms of tissue distribution, mostly expressed in leaves and siliques, and, to a lower extent, in roots, stems and flowers.

It localises to the vacuole membrane. Its function is as follows. High affinity carnitine transporter involved in the active cellular uptake of carnitine. Also transports organic cations. The polypeptide is Organic cation/carnitine transporter 5 (OCT5) (Arabidopsis thaliana (Mouse-ear cress)).